The following is a 230-amino-acid chain: uncharacterized protein (230 aa).

Residues 93 to 115 (VFLYYFLIVYTSGNVDLISRFLF) form a helical membrane-spanning segment.

Belongs to the DUP/COS family.

It localises to the membrane. This is an uncharacterized protein from Saccharomyces cerevisiae (strain ATCC 204508 / S288c) (Baker's yeast).